The following is a 727-amino-acid chain: NADH-ubiquinone oxidoreductase 75 kDa subunit, mitochondrial (727 aa).

Residues 1-23 constitute a mitochondrion transit peptide; that stretch reads MLRIPVKRALIGLSKSPKGYVRS. Residues 30-108 form the 2Fe-2S ferredoxin-type domain; it reads NLIEVFVDGQ…GWNILTNSEK (79 aa). The [2Fe-2S] cluster site is built by cysteine 64, cysteine 75, and cysteine 78. Lysine 84 is modified (N6-acetyllysine). [2Fe-2S] cluster is bound at residue cysteine 92. Residues 108–147 form the 4Fe-4S His(Cys)3-ligated-type domain; sequence KSKKAREGVMEFLLANHPLDCPICDQGGECDLQDQSMMFG. Positions 124, 128, 131, 137, 176, 179, 182, and 226 each coordinate [4Fe-4S] cluster. The 4Fe-4S Mo/W bis-MGD-type domain occupies 245 to 301; the sequence is TRKTESIDVMDAVGSNIVVSTRTGEVMRILPRMHEDINEEWISDKTRFAYDGLKRQR. Lysine 499 and lysine 709 each carry N6-acetyllysine.

This sequence belongs to the complex I 75 kDa subunit family. In terms of assembly, core subunit of respiratory chain NADH dehydrogenase (Complex I) which is composed of 45 different subunits. This is the largest subunit of complex I and it is a component of the iron-sulfur (IP) fragment of the enzyme. Complex I associates with ubiquinol-cytochrome reductase complex (Complex III) to form supercomplexes. Interacts with MDM2 and AKAP1. Requires [2Fe-2S] cluster as cofactor. [4Fe-4S] cluster is required as a cofactor.

It is found in the mitochondrion inner membrane. The catalysed reaction is a ubiquinone + NADH + 5 H(+)(in) = a ubiquinol + NAD(+) + 4 H(+)(out). Functionally, core subunit of the mitochondrial membrane respiratory chain NADH dehydrogenase (Complex I) which catalyzes electron transfer from NADH through the respiratory chain, using ubiquinone as an electron acceptor. Essential for catalysing the entry and efficient transfer of electrons within complex I. Plays a key role in the assembly and stability of complex I and participates in the association of complex I with ubiquinol-cytochrome reductase complex (Complex III) to form supercomplexes. This Rattus norvegicus (Rat) protein is NADH-ubiquinone oxidoreductase 75 kDa subunit, mitochondrial (Ndufs1).